The sequence spans 465 residues: Lysosomal dipeptide transporter MFSD1 (465 aa).

The interval 1-23 (MEEEDEEARALLAGGPDEADRGA) is disordered. The short motif at 11–12 (LL) is the Dileucine internalization motif element. 12 helical membrane-spanning segments follow: residues 39-59 (LAHR…SYFC), 83-103 (LLYA…GFLI), 113-133 (TIIF…GGIF), 135-155 (AFWL…SLAV), 170-191 (LNLV…NMNL), 213-233 (ITLM…LALA), 266-286 (LWLI…FIGL), 303-323 (SAIN…FGLL), 331-351 (IIWV…LAFT), 361-381 (LLGL…AFVV), 392-412 (FMQS…GMIL), and 418-438 (LFLE…VVLL).

It belongs to the major facilitator superfamily. In terms of assembly, homodimer. Interacts with lysosomal protein GLMP (via lumenal domain); the interaction starts while both proteins are still in the endoplasmic reticulum and is required for stabilization of MFSD1 in lysosomes but has no direct effect on its targeting to lysosomes or transporter activity.

The protein localises to the lysosome membrane. It catalyses the reaction L-alpha-aminoacyl-L-arginine(out) = L-alpha-aminoacyl-L-arginine(in). The enzyme catalyses L-arginyl-L-alpha-amino acid(out) = L-arginyl-L-alpha-amino acid(in). The catalysed reaction is L-arginyl-glycine(out) = L-arginyl-glycine(in). It carries out the reaction L-alpha-aminoacyl-L-lysine(out) = L-alpha-aminoacyl-L-lysine(in). It catalyses the reaction L-aspartyl-L-lysine(out) = L-aspartyl-L-lysine(in). The enzyme catalyses L-alanyl-L-lysine(out) = L-alanyl-L-lysine(in). The catalysed reaction is L-lysyl-L-alpha-amino acid(out) = L-lysyl-L-alpha-amino acid(in). It carries out the reaction L-lysyl-L-alanine(out) = L-lysyl-L-alanine(in). It catalyses the reaction L-lysyl-L-lysine(out) = L-lysyl-L-lysine(in). The enzyme catalyses L-lysyl-glycine(out) = L-lysyl-glycine(in). The catalysed reaction is L-alpha-aminoacyl-L-histidine(out) = L-alpha-aminoacyl-L-histidine(in). It carries out the reaction L-histidyl-L-alpha-amino acid(out) = L-histidyl-L-alpha-amino acid(in). It catalyses the reaction L-histidyl-glycine(out) = L-histidyl-glycine(in). In terms of biological role, lysosomal dipeptide uniporter that selectively exports lysine, arginine or histidine-containing dipeptides with a net positive charge from the lysosome lumen into the cytosol. Could play a role in a specific type of protein O-glycosylation indirectly regulating macrophages migration and tissue invasion. Also essential for liver homeostasis. The chain is Lysosomal dipeptide transporter MFSD1 from Homo sapiens (Human).